Here is a 190-residue protein sequence, read N- to C-terminus: Mitochondrial inner membrane protease subunit 1 (190 aa).

Residues Ser40 and Lys84 contribute to the active site.

It belongs to the peptidase S26 family. IMP1 subfamily. As to quaternary structure, component of the mitochondrial inner membrane peptidase (IMP) complex which at least consists of IMP1, IMP2 and SOM1.

The protein resides in the mitochondrion inner membrane. In terms of biological role, catalytic component of the mitochondrial inner membrane peptidase (IMP) complex. IMP catalyzes the removal of signal peptides required for the targeting of proteins from the mitochondrial matrix, across the inner membrane, into the inter-membrane space. The two catalytic IMP subunits seem to have non-overlapping substrate specificities. IMP1 substrates include nuclear encoded CYB2, mitochondrially encoded COX2, NADH-cytochrome b5 reductase and GUT2. The chain is Mitochondrial inner membrane protease subunit 1 (IMP1) from Saccharomyces cerevisiae (strain ATCC 204508 / S288c) (Baker's yeast).